The sequence spans 351 residues: UDP-N-acetylglucosamine--N-acetylmuramyl-(pentapeptide) pyrophosphoryl-undecaprenol N-acetylglucosamine transferase (351 aa).

UDP-N-acetyl-alpha-D-glucosamine-binding positions include 13 to 15 (TGG), N125, R161, S189, I241, 260 to 265 (ALTVCE), and Q285.

The protein belongs to the glycosyltransferase 28 family. MurG subfamily.

The protein localises to the cell inner membrane. It catalyses the reaction di-trans,octa-cis-undecaprenyl diphospho-N-acetyl-alpha-D-muramoyl-L-alanyl-D-glutamyl-meso-2,6-diaminopimeloyl-D-alanyl-D-alanine + UDP-N-acetyl-alpha-D-glucosamine = di-trans,octa-cis-undecaprenyl diphospho-[N-acetyl-alpha-D-glucosaminyl-(1-&gt;4)]-N-acetyl-alpha-D-muramoyl-L-alanyl-D-glutamyl-meso-2,6-diaminopimeloyl-D-alanyl-D-alanine + UDP + H(+). It participates in cell wall biogenesis; peptidoglycan biosynthesis. Its function is as follows. Cell wall formation. Catalyzes the transfer of a GlcNAc subunit on undecaprenyl-pyrophosphoryl-MurNAc-pentapeptide (lipid intermediate I) to form undecaprenyl-pyrophosphoryl-MurNAc-(pentapeptide)GlcNAc (lipid intermediate II). This chain is UDP-N-acetylglucosamine--N-acetylmuramyl-(pentapeptide) pyrophosphoryl-undecaprenol N-acetylglucosamine transferase, found in Haemophilus influenzae (strain 86-028NP).